Here is a 405-residue protein sequence, read N- to C-terminus: Riboflavin biosynthesis protein RibBA (405 aa).

The interval 1–205 (MEEIKLNTIE…IKDLIAYRLK (205 aa)) is DHBP synthase. D-ribulose 5-phosphate-binding positions include 30-31 (RE), Asp-35, 144-148 (RAGHT), and Glu-168. Glu-31 is a Mg(2+) binding site. A Mg(2+)-binding site is contributed by His-147. The GTP cyclohydrolase II stretch occupies residues 206–405 (QESIVEKGVE…RMGHELHNIK (200 aa)). 256–260 (RMHSS) is a binding site for GTP. Residues Cys-261, Cys-272, and Cys-274 each contribute to the Zn(2+) site. GTP-binding positions include Gln-277, 299–301 (EGR), and Thr-321. Asp-333 (proton acceptor; for GTP cyclohydrolase activity) is an active-site residue. Residue Arg-335 is the Nucleophile; for GTP cyclohydrolase activity of the active site. Positions 356 and 361 each coordinate GTP.

In the N-terminal section; belongs to the DHBP synthase family. The protein in the C-terminal section; belongs to the GTP cyclohydrolase II family. Mg(2+) is required as a cofactor. Mn(2+) serves as cofactor. It depends on Zn(2+) as a cofactor.

It catalyses the reaction D-ribulose 5-phosphate = (2S)-2-hydroxy-3-oxobutyl phosphate + formate + H(+). The catalysed reaction is GTP + 4 H2O = 2,5-diamino-6-hydroxy-4-(5-phosphoribosylamino)-pyrimidine + formate + 2 phosphate + 3 H(+). It functions in the pathway cofactor biosynthesis; riboflavin biosynthesis; 2-hydroxy-3-oxobutyl phosphate from D-ribulose 5-phosphate: step 1/1. It participates in cofactor biosynthesis; riboflavin biosynthesis; 5-amino-6-(D-ribitylamino)uracil from GTP: step 1/4. In terms of biological role, catalyzes the conversion of D-ribulose 5-phosphate to formate and 3,4-dihydroxy-2-butanone 4-phosphate. Catalyzes the conversion of GTP to 2,5-diamino-6-ribosylamino-4(3H)-pyrimidinone 5'-phosphate (DARP), formate and pyrophosphate. The polypeptide is Riboflavin biosynthesis protein RibBA (Porphyromonas gingivalis (strain ATCC 33277 / DSM 20709 / CIP 103683 / JCM 12257 / NCTC 11834 / 2561)).